The following is a 225-amino-acid chain: UPF0173 metal-dependent hydrolase PYRAB05000 (225 aa).

The protein belongs to the UPF0173 family.

This is UPF0173 metal-dependent hydrolase PYRAB05000 from Pyrococcus abyssi (strain GE5 / Orsay).